A 178-amino-acid chain; its full sequence is Cell division protein SepF (178 aa).

Basic and acidic residues predominate over residues 19-45; it reads EHYESEHHTPHKDEDDSMEHDREERRA. A disordered region spans residues 19-65; that stretch reads EHYESEHHTPHKDEDDSMEHDREERRAPAPVREIARETPTPHAAEEE.

This sequence belongs to the SepF family. In terms of assembly, homodimer. Interacts with FtsZ.

It is found in the cytoplasm. Its function is as follows. Cell division protein that is part of the divisome complex and is recruited early to the Z-ring. Probably stimulates Z-ring formation, perhaps through the cross-linking of FtsZ protofilaments. Its function overlaps with FtsA. The sequence is that of Cell division protein SepF from Arthrobacter sp. (strain FB24).